Reading from the N-terminus, the 576-residue chain is Arginine--tRNA ligase (576 aa).

Positions 126 to 136 match the 'HIGH' region motif; it reads ANPTGPMHIGH.

It belongs to the class-I aminoacyl-tRNA synthetase family. As to quaternary structure, monomer.

It is found in the cytoplasm. The enzyme catalyses tRNA(Arg) + L-arginine + ATP = L-arginyl-tRNA(Arg) + AMP + diphosphate. This chain is Arginine--tRNA ligase, found in Rickettsia bellii (strain OSU 85-389).